The sequence spans 350 residues: Biotin synthase (350 aa).

The 228-residue stretch at 41–268 (NEVQVSRLLS…KSRVRLSAGR (228 aa)) folds into the Radical SAM core domain. Positions 56, 60, and 63 each coordinate [4Fe-4S] cluster. [2Fe-2S] cluster is bound by residues Cys100, Cys131, Cys191, and Arg263.

The protein belongs to the radical SAM superfamily. Biotin synthase family. As to quaternary structure, homodimer. It depends on [4Fe-4S] cluster as a cofactor. [2Fe-2S] cluster serves as cofactor.

It catalyses the reaction (4R,5S)-dethiobiotin + (sulfur carrier)-SH + 2 reduced [2Fe-2S]-[ferredoxin] + 2 S-adenosyl-L-methionine = (sulfur carrier)-H + biotin + 2 5'-deoxyadenosine + 2 L-methionine + 2 oxidized [2Fe-2S]-[ferredoxin]. Its pathway is cofactor biosynthesis; biotin biosynthesis; biotin from 7,8-diaminononanoate: step 2/2. In terms of biological role, catalyzes the conversion of dethiobiotin (DTB) to biotin by the insertion of a sulfur atom into dethiobiotin via a radical-based mechanism. The polypeptide is Biotin synthase (Shewanella pealeana (strain ATCC 700345 / ANG-SQ1)).